Reading from the N-terminus, the 323-residue chain is Beta-ketoacyl-[acyl-carrier-protein] synthase III (323 aa).

Active-site residues include cysteine 112 and histidine 250. An ACP-binding region spans residues 251–255 (QANQR). The active site involves asparagine 280.

The protein belongs to the thiolase-like superfamily. FabH family. As to quaternary structure, homodimer.

It localises to the cytoplasm. The catalysed reaction is malonyl-[ACP] + acetyl-CoA + H(+) = 3-oxobutanoyl-[ACP] + CO2 + CoA. Its pathway is lipid metabolism; fatty acid biosynthesis. Functionally, catalyzes the condensation reaction of fatty acid synthesis by the addition to an acyl acceptor of two carbons from malonyl-ACP. Catalyzes the first condensation reaction which initiates fatty acid synthesis and may therefore play a role in governing the total rate of fatty acid production. Possesses both acetoacetyl-ACP synthase and acetyl transacylase activities. Its substrate specificity determines the biosynthesis of branched-chain and/or straight-chain of fatty acids. The protein is Beta-ketoacyl-[acyl-carrier-protein] synthase III of Oenococcus oeni (strain ATCC BAA-331 / PSU-1).